The sequence spans 235 residues: Large ribosomal subunit protein uL1 (235 aa).

This sequence belongs to the universal ribosomal protein uL1 family. Part of the 50S ribosomal subunit.

Binds directly to 23S rRNA. The L1 stalk is quite mobile in the ribosome, and is involved in E site tRNA release. Its function is as follows. Protein L1 is also a translational repressor protein, it controls the translation of the L11 operon by binding to its mRNA. This Renibacterium salmoninarum (strain ATCC 33209 / DSM 20767 / JCM 11484 / NBRC 15589 / NCIMB 2235) protein is Large ribosomal subunit protein uL1.